Consider the following 420-residue polypeptide: Tryptophan synthase beta chain (420 aa).

N6-(pyridoxal phosphate)lysine is present on Lys112.

It belongs to the TrpB family. In terms of assembly, tetramer of two alpha and two beta chains. It depends on pyridoxal 5'-phosphate as a cofactor.

It carries out the reaction (1S,2R)-1-C-(indol-3-yl)glycerol 3-phosphate + L-serine = D-glyceraldehyde 3-phosphate + L-tryptophan + H2O. Its pathway is amino-acid biosynthesis; L-tryptophan biosynthesis; L-tryptophan from chorismate: step 5/5. In terms of biological role, the beta subunit is responsible for the synthesis of L-tryptophan from indole and L-serine. In Thermosipho africanus (strain TCF52B), this protein is Tryptophan synthase beta chain.